Consider the following 204-residue polypeptide: Ribonuclease HII (204 aa).

Residues 16 to 204 (ESIAGCDEVG…RRSFLKKILK (189 aa)) enclose the RNase H type-2 domain. Positions 22, 23, and 120 each coordinate a divalent metal cation.

The protein belongs to the RNase HII family. The cofactor is Mn(2+). It depends on Mg(2+) as a cofactor.

The protein localises to the cytoplasm. The enzyme catalyses Endonucleolytic cleavage to 5'-phosphomonoester.. In terms of biological role, endonuclease that specifically degrades the RNA of RNA-DNA hybrids. The chain is Ribonuclease HII from Alkaliphilus metalliredigens (strain QYMF).